The primary structure comprises 398 residues: Acetyl-CoA acetyltransferase (398 aa).

An N-acetylserine modification is found at serine 2. Cysteine 91 (acyl-thioester intermediate) is an active-site residue. Residues tyrosine 186 and lysine 231 each coordinate CoA. K(+) is bound at residue tyrosine 186. 3 residues coordinate K(+): alanine 248, alanine 249, and alanine 251. Serine 252 lines the CoA pocket. Valine 350 is a binding site for K(+). Active-site proton acceptor residues include histidine 354 and cysteine 384.

It belongs to the thiolase-like superfamily. Thiolase family. Homotetramer.

It localises to the cytoplasm. The protein localises to the cytosol. It catalyses the reaction 2 acetyl-CoA = acetoacetyl-CoA + CoA. It participates in metabolic intermediate biosynthesis; (R)-mevalonate biosynthesis; (R)-mevalonate from acetyl-CoA: step 1/3. Its function is as follows. Acetyl-CoA acetyltransferase; part of the first module of ergosterol biosynthesis pathway that includes the early steps of the pathway, conserved across all eukaryotes, and which results in the formation of mevalonate from acetyl-coenzyme A (acetyl-CoA). ERG10 catalyzes the formation of acetoacetyl-CoA from acetyl-CoA. The first module starts with the action of the cytosolic acetyl-CoA acetyltransferase ERG10 that catalyzes the formation of acetoacetyl-CoA. The hydroxymethylglutaryl-CoA synthase ERG13 then condenses acetyl-CoA with acetoacetyl-CoA to form HMG-CoA. The rate-limiting step of the early module is the reduction to mevalonate by the 3-hydroxy-3-methylglutaryl-coenzyme A (HMG-CoA) reductases HMG1 and HMG2 which are derived from a single ancestral HMGR gene by gene duplication. The polypeptide is Acetyl-CoA acetyltransferase (Saccharomyces cerevisiae (strain ATCC 204508 / S288c) (Baker's yeast)).